The following is a 364-amino-acid chain: Ribosomal RNA large subunit methyltransferase M (364 aa).

S-adenosyl-L-methionine-binding positions include Ser187, 220–223, Asp239, Asp259, and Asp276; that span reads CPGG. The Proton acceptor role is filled by Lys305.

Belongs to the class I-like SAM-binding methyltransferase superfamily. RNA methyltransferase RlmE family. RlmM subfamily. As to quaternary structure, monomer.

The protein localises to the cytoplasm. It catalyses the reaction cytidine(2498) in 23S rRNA + S-adenosyl-L-methionine = 2'-O-methylcytidine(2498) in 23S rRNA + S-adenosyl-L-homocysteine + H(+). Its function is as follows. Catalyzes the 2'-O-methylation at nucleotide C2498 in 23S rRNA. This is Ribosomal RNA large subunit methyltransferase M from Aeromonas salmonicida (strain A449).